The sequence spans 882 residues: Formin-like protein 9 (882 aa).

A signal peptide spans 1–19; the sequence is MGMAMRCVLVLFSVSPVLL. A disordered region spans residues 67–92; that stretch reads SRGRRHKRYSEAPAPAPAPVPAHQAR. The chain crosses the membrane as a helical span at residues 138–158; it reads IVALGVVGLCLVVLGVVIAAF. Disordered regions lie at residues 178-202, 293-316, and 401-471; these read RHGSRDQRSPAATRKVSSHPSPDPL, THDSPSDSSYQSLSPDCTSRLSPK, and TMTN…PLPR. Residues 298–308 are compositionally biased toward low complexity; it reads SDSSYQSLSPD. Pro residues predominate over residues 427 to 441; the sequence is KPAPPPPPQKNPPPN. One can recognise an FH2 domain in the interval 462–882; the sequence is VGKDGSPLPR…QTLNLVLPLK (421 aa).

The protein belongs to the formin-like family. Class-I subfamily.

The protein localises to the membrane. In Oryza sativa subsp. japonica (Rice), this protein is Formin-like protein 9 (FH9).